The sequence spans 485 residues: Keratin, type I cytoskeletal 14 (485 aa).

Polar residues predominate over residues 1–15 (MATCSRQFTSSSSMK). A disordered region spans residues 1 to 21 (MATCSRQFTSSSSMKGSCGIG). Residues 1–121 (MATCSRQFTS…GLGDGLLVGS (121 aa)) form a head region. Residues 122 to 157 (EKVTMQNLNDRLATYLDKVRALEEANSDLEVKIRDW) form a coil 1A region. The IF rod domain occupies 122–433 (EKVTMQNLND…RLLEGEDAHL (312 aa)). The tract at residues 158-175 (YQRQRPTEIKDYSPYFKT) is linker 1. Positions 176–267 (IEDLKSKILA…KNHEEEMASM (92 aa)) are coil 1B. Residues 268-290 (RGQVGGDVNVEMDAAPGVDLSRI) form a linker 12 region. The tract at residues 291–429 (LNEMRDQYEK…ATYRRLLEGE (139 aa)) is coil 2. The segment at 430–485 (DAHLSSAQFSSSSQFSSGSQSSRDVTSTNRQIRTKVMDVHDGKVVSTHEQVLRTKN) is tail. Positions 432–485 (HLSSAQFSSSSQFSSGSQSSRDVTSTNRQIRTKVMDVHDGKVVSTHEQVLRTKN) are interaction with Type I keratins and keratin filaments. The segment covering 437-451 (QFSSSSQFSSGSQSS) has biased composition (low complexity). The tract at residues 437–458 (QFSSSSQFSSGSQSSRDVTSTN) is disordered. Serine 448 is modified (phosphoserine).

The protein belongs to the intermediate filament family. As to quaternary structure, heterotetramer of two type I and two type II keratins. Forms a disulfide-linked heterodimer (via 2B domains) with KRT5 (via 2B domains). Forms a heterodimer with KRT1; the interaction is more abundant in the absence of KRT5. Interacts with TRADD and with keratin filaments. Associates with other type I keratins. Interacts with EPPK1. Interacts with KLHL24. Interacts with PKP1 (via N-terminus) and PKP2. In terms of processing, a disulfide bond is formed between rather than within filaments and promotes the formation of a keratin filament cage around the nucleus. Ubiquitinated by the BCR(KLHL24) E3 ubiquitin ligase complex. In terms of tissue distribution, expressed in most cells of squamous cell carcinomas, in spinous and suprabasal cells around the branching papillary region of papillomas, and weakly in a few proliferative cells of hyperplastic tissue.

It localises to the cytoplasm. Its subcellular location is the nucleus. Functionally, the nonhelical tail domain is involved in promoting KRT5-KRT14 filaments to self-organize into large bundles and enhances the mechanical properties involved in resilience of keratin intermediate filaments in vitro. The polypeptide is Keratin, type I cytoskeletal 14 (Krt14) (Rattus norvegicus (Rat)).